We begin with the raw amino-acid sequence, 119 residues long: Large ribosomal subunit protein uL22 (119 aa).

The protein belongs to the universal ribosomal protein uL22 family. In terms of assembly, part of the 50S ribosomal subunit.

Its function is as follows. This protein binds specifically to 23S rRNA; its binding is stimulated by other ribosomal proteins, e.g. L4, L17, and L20. It is important during the early stages of 50S assembly. It makes multiple contacts with different domains of the 23S rRNA in the assembled 50S subunit and ribosome. The globular domain of the protein is located near the polypeptide exit tunnel on the outside of the subunit, while an extended beta-hairpin is found that lines the wall of the exit tunnel in the center of the 70S ribosome. This is Large ribosomal subunit protein uL22 from Bifidobacterium adolescentis (strain ATCC 15703 / DSM 20083 / NCTC 11814 / E194a).